A 281-amino-acid chain; its full sequence is Ermin (281 aa).

Polar residues-rich tracts occupy residues 1–12, 21–31, and 135–147; these read MTDTPETLSGTE, NGQQPSSQTRQ, and AQQQ…DAST. Disordered regions lie at residues 1-80, 110-147, and 167-248; these read MTDT…KILN, REGH…DAST, and KCDE…GDIA. Residues 169–197 are compositionally biased toward acidic residues; sequence DEEEEEEEEVWNEEINEEDVDECAEEEDE. Basic and acidic residues predominate over residues 198-223; sequence VRVIEFKRKHREGSPLKEESLAREDS. Serine 211, serine 223, serine 227, and serine 230 each carry phosphoserine. Phosphothreonine is present on threonine 234. The segment at 262–281 is binds actin; it reads KIRKGNTKQRIDEFESMMHL.

In terms of assembly, binds actin. Brain and spinal cord. Exclusively expressed by the oligodendrocytes. Appears at a late stage during myelination, and in the mature nerves, it is localized to the outer cytoplasmic lip of the myelin sheath and the paranodal loops.

The protein resides in the cytoplasm. Its subcellular location is the cytoskeleton. Plays a role in cytoskeletal rearrangements during the late wrapping and/or compaction phases of myelinogenesis as well as in maintenance and stability of myelin sheath in the adult. May play an important role in late-stage oligodendroglia maturation, myelin/Ranvier node formation during CNS development, and in the maintenance and plasticity of related structures in the mature CNS. The polypeptide is Ermin (Ermn) (Mus musculus (Mouse)).